A 412-amino-acid chain; its full sequence is Peptidase T (412 aa).

Position 81 (His81) interacts with Zn(2+). Residue Asp83 is part of the active site. Asp144 provides a ligand contact to Zn(2+). Glu178 serves as the catalytic Proton acceptor. Zn(2+) is bound by residues Glu179, Asp201, and His383.

This sequence belongs to the peptidase M20B family. Zn(2+) is required as a cofactor.

The protein resides in the cytoplasm. It catalyses the reaction Release of the N-terminal residue from a tripeptide.. Functionally, cleaves the N-terminal amino acid of tripeptides. In Bacillus cereus (strain Q1), this protein is Peptidase T.